A 146-amino-acid polypeptide reads, in one-letter code: Large ribosomal subunit protein uL15 (146 aa).

A disordered region spans residues 1-66; sequence MKLHELKPAP…LQRRMPKRGF (66 aa). Gly residues-rich tracts occupy residues 21–31 and 42–52; these read QGIGSGMGKTA and SGGGVRPGFEG.

This sequence belongs to the universal ribosomal protein uL15 family. As to quaternary structure, part of the 50S ribosomal subunit.

Binds to the 23S rRNA. The chain is Large ribosomal subunit protein uL15 from Pelotomaculum thermopropionicum (strain DSM 13744 / JCM 10971 / SI).